A 329-amino-acid chain; its full sequence is Cathepsin K (329 aa).

The signal sequence occupies residues Met1–Ala15. Positions Leu16–Arg114 are cleaved as a propeptide — activation peptide. N-linked (GlcNAc...) asparagine glycosylation occurs at Asn103. 2 cysteine pairs are disulfide-bonded: Cys136–Cys177 and Cys170–Cys210. Cys139 is an active-site residue. An N-linked (GlcNAc...) asparagine glycan is attached at Asn213. A disulfide bridge links Cys269 with Cys318. Active-site residues include His276 and Asn296.

Belongs to the peptidase C1 family.

It is found in the lysosome. The protein localises to the secreted. Its subcellular location is the apical cell membrane. The catalysed reaction is Broad proteolytic activity. With small-molecule substrates and inhibitors, the major determinant of specificity is P2, which is preferably Leu, Met &gt; Phe, and not Arg.. Thiol protease involved in osteoclastic bone resorption and may participate partially in the disorder of bone remodeling. Displays potent endoprotease activity against fibrinogen at acid pH. May play an important role in extracellular matrix degradation. Involved in the release of thyroid hormone thyroxine (T4) by limited proteolysis of TG/thyroglobulin in the thyroid follicle lumen. The polypeptide is Cathepsin K (Ctsk) (Rattus norvegicus (Rat)).